The primary structure comprises 108 residues: uncharacterized protein (108 aa).

Polar residues predominate over residues M1–S12. Positions M1–Q22 are disordered.

This is an uncharacterized protein from Dictyostelium discoideum (Social amoeba).